A 202-amino-acid chain; its full sequence is Inosine triphosphate pyrophosphatase (202 aa).

8-13 lines the ITP pocket; that stretch reads TGNANK. Residue Glu55 coordinates Mg(2+). ITP is bound by residues Lys67, 83–84, Lys100, 159–162, Lys182, and 187–188; these read DT, FGWD, and HR.

Belongs to the HAM1 NTPase family. Homodimer. Mg(2+) serves as cofactor. Mn(2+) is required as a cofactor.

Its subcellular location is the cytoplasm. The protein localises to the nucleus. It carries out the reaction ITP + H2O = IMP + diphosphate + H(+). It catalyses the reaction dITP + H2O = dIMP + diphosphate + H(+). The enzyme catalyses XTP + H2O = XMP + diphosphate + H(+). Functionally, pyrophosphatase that hydrolyzes non-canonical purine nucleotides such as inosine triphosphate (ITP), deoxyinosine triphosphate (dITP) or xanthosine 5'-triphosphate (XTP) to their respective monophosphate derivatives. The enzyme does not distinguish between the deoxy- and ribose forms. Probably excludes non-canonical purines from RNA and DNA precursor pools, thus preventing their incorporation into RNA and DNA and avoiding chromosomal lesions. This is Inosine triphosphate pyrophosphatase from Candida albicans (strain SC5314 / ATCC MYA-2876) (Yeast).